Consider the following 209-residue polypeptide: ATP-dependent Clp protease proteolytic subunit 2 (209 aa).

The active-site Nucleophile is serine 107. Histidine 132 is an active-site residue.

The protein belongs to the peptidase S14 family. As to quaternary structure, fourteen ClpP subunits assemble into 2 heptameric rings which stack back to back to give a disk-like structure with a central cavity, resembling the structure of eukaryotic proteasomes.

It is found in the cytoplasm. It catalyses the reaction Hydrolysis of proteins to small peptides in the presence of ATP and magnesium. alpha-casein is the usual test substrate. In the absence of ATP, only oligopeptides shorter than five residues are hydrolyzed (such as succinyl-Leu-Tyr-|-NHMec, and Leu-Tyr-Leu-|-Tyr-Trp, in which cleavage of the -Tyr-|-Leu- and -Tyr-|-Trp bonds also occurs).. In terms of biological role, cleaves peptides in various proteins in a process that requires ATP hydrolysis. Has a chymotrypsin-like activity. Plays a major role in the degradation of misfolded proteins. This is ATP-dependent Clp protease proteolytic subunit 2 from Corynebacterium jeikeium (strain K411).